A 284-amino-acid chain; its full sequence is ASC1-like protein 3 (284 aa).

6 helical membrane passes run 9 to 29 (SSFFPLTLVFSVGFFCARFFL), 69 to 89 (LTYYGSVQAWVLLIIKQEPWS), 108 to 128 (LMLFYMCQCGFYIYSIFALVA), 148 to 168 (ILIGYAYLTGFFRIGTIILAL), 195 to 215 (FGLFALSWLLLRLIYFPFWII), and 243 to 263 (MLLTLLVFHIYWWKLICLMIM). The 208-residue stretch at 60–267 (VKFSESIWKL…ICLMIMKQLN (208 aa)) folds into the TLC domain.

It is found in the endoplasmic reticulum membrane. Its function is as follows. Mediates resistance to sphinganine-analog mycotoxins (SAMs) by restoring the sphingolipid biosynthesis. Could salvage the transport of GPI-anchored proteins from the endoplasmic reticulum to the Golgi apparatus in ceramides-depleted cells after SAM exposure. This Oryza sativa subsp. japonica (Rice) protein is ASC1-like protein 3.